The primary structure comprises 105 residues: Phosphoribosyl-AMP cyclohydrolase (105 aa).

D72 lines the Mg(2+) pocket. C73 is a binding site for Zn(2+). 2 residues coordinate Mg(2+): D74 and D76. Residues C89 and C96 each coordinate Zn(2+).

The protein belongs to the PRA-CH family. Homodimer. Mg(2+) serves as cofactor. Zn(2+) is required as a cofactor.

Its subcellular location is the cytoplasm. The catalysed reaction is 1-(5-phospho-beta-D-ribosyl)-5'-AMP + H2O = 1-(5-phospho-beta-D-ribosyl)-5-[(5-phospho-beta-D-ribosylamino)methylideneamino]imidazole-4-carboxamide. It functions in the pathway amino-acid biosynthesis; L-histidine biosynthesis; L-histidine from 5-phospho-alpha-D-ribose 1-diphosphate: step 3/9. Functionally, catalyzes the hydrolysis of the adenine ring of phosphoribosyl-AMP. The chain is Phosphoribosyl-AMP cyclohydrolase from Listeria monocytogenes serotype 4a (strain HCC23).